A 356-amino-acid chain; its full sequence is Glutamine synthetase root isozyme 3 (356 aa).

In terms of domain architecture, GS beta-grasp spans 19–99 (IIAEYIWIGG…VMCDCYTPAG (81 aa)). The GS catalytic domain maps to 106–356 (KRYNAAKIFS…IAETTIIWKP (251 aa)).

It belongs to the glutamine synthetase family. As to quaternary structure, homooctamer. In terms of tissue distribution, found in all the tissues examined with higher expression found in tissues of the root.

It localises to the cytoplasm. It catalyses the reaction L-glutamate + NH4(+) + ATP = L-glutamine + ADP + phosphate + H(+). Functionally, plays a role in the flow of nitrogen into nitrogenous organic compounds. In Zea mays (Maize), this protein is Glutamine synthetase root isozyme 3 (GLN4).